The following is a 692-amino-acid chain: Penicillin-binding protein activator LpoA (692 aa).

An N-terminal signal peptide occupies residues Met1 to Ala26. Cys27 carries N-palmitoyl cysteine lipidation. Cys27 is lipidated: S-diacylglycerol cysteine. 2 disordered regions span residues Ala297–Thr316 and Val324–His373. Residues Pro332–Pro363 are compositionally biased toward low complexity.

It belongs to the LpoA family. In terms of assembly, interacts with PBP1a.

It is found in the cell outer membrane. Functionally, regulator of peptidoglycan synthesis that is essential for the function of penicillin-binding protein 1A (PBP1a). This is Penicillin-binding protein activator LpoA from Edwardsiella piscicida.